We begin with the raw amino-acid sequence, 419 residues long: MKKMLIQGGNLLSGEVTIGGAKNSTVAIIPAAILAESKVVLDSVPHIKDVNSLLSILEDMSVTSTFTGDTVEIDPTNIVSTPLPSGKIQSLRASYYFMGALLGRFGKAIVGLPGGDDIGPRPIDQHIKGFEALGAVVTNNHGAIEINAPEGLHGAKIYLDMASVGATINLLLAAVRAEGQTVIENAAREPEIVDIATFLNNMGAKVRGAGTDIIRIEGVAHLYGHNTHTIIPDRIEAGTYLSMAAAIGDGVNVKNIISEHMDAYLAKLEEMGVKMDVKEDSIFVYPSPDLKMVQVKTMPYPGFATDLQQPLTPLLLKAQGEGLVVDTLYPKRTRHVPELIRMGADISIENDVILLHHADKLQGAEVSADEIRGGACLMIAGLMANGVTTITNASNILRGYDRVIDKLTGLGAVVKMVEE.

22–23 contacts phosphoenolpyruvate; sequence KN. Arg92 is a binding site for UDP-N-acetyl-alpha-D-glucosamine. The active-site Proton donor is Asp116. UDP-N-acetyl-alpha-D-glucosamine-binding positions include 121 to 125, Asp306, and Leu328; that span reads RPIDQ.

It belongs to the EPSP synthase family. MurA subfamily.

The protein localises to the cytoplasm. The catalysed reaction is phosphoenolpyruvate + UDP-N-acetyl-alpha-D-glucosamine = UDP-N-acetyl-3-O-(1-carboxyvinyl)-alpha-D-glucosamine + phosphate. Its pathway is cell wall biogenesis; peptidoglycan biosynthesis. Functionally, cell wall formation. Adds enolpyruvyl to UDP-N-acetylglucosamine. The protein is UDP-N-acetylglucosamine 1-carboxyvinyltransferase 2 of Latilactobacillus sakei subsp. sakei (strain 23K) (Lactobacillus sakei subsp. sakei).